Consider the following 342-residue polypeptide: Ketol-acid reductoisomerase (NADP(+)) (342 aa).

Positions 2–182 (AELFYDDDAD…GGLRAAGIKT (181 aa)) constitute a KARI N-terminal Rossmann domain. Residues 25–28 (YGSQ), Arg-48, Ser-51, Ser-53, and 83–86 (DQHQ) each bind NADP(+). His-108 is a catalytic residue. NADP(+) is bound at residue Gly-134. Positions 183–328 (TFTEETETDL…RELRKLFAWV (146 aa)) constitute a KARI C-terminal knotted domain. Asp-191, Glu-195, Glu-227, and Glu-231 together coordinate Mg(2+). Ser-252 is a substrate binding site.

This sequence belongs to the ketol-acid reductoisomerase family. Mg(2+) serves as cofactor.

It carries out the reaction (2R)-2,3-dihydroxy-3-methylbutanoate + NADP(+) = (2S)-2-acetolactate + NADPH + H(+). The catalysed reaction is (2R,3R)-2,3-dihydroxy-3-methylpentanoate + NADP(+) = (S)-2-ethyl-2-hydroxy-3-oxobutanoate + NADPH + H(+). The protein operates within amino-acid biosynthesis; L-isoleucine biosynthesis; L-isoleucine from 2-oxobutanoate: step 2/4. It participates in amino-acid biosynthesis; L-valine biosynthesis; L-valine from pyruvate: step 2/4. Functionally, involved in the biosynthesis of branched-chain amino acids (BCAA). Catalyzes an alkyl-migration followed by a ketol-acid reduction of (S)-2-acetolactate (S2AL) to yield (R)-2,3-dihydroxy-isovalerate. In the isomerase reaction, S2AL is rearranged via a Mg-dependent methyl migration to produce 3-hydroxy-3-methyl-2-ketobutyrate (HMKB). In the reductase reaction, this 2-ketoacid undergoes a metal-dependent reduction by NADPH to yield (R)-2,3-dihydroxy-isovalerate. This Beutenbergia cavernae (strain ATCC BAA-8 / DSM 12333 / CCUG 43141 / JCM 11478 / NBRC 16432 / NCIMB 13614 / HKI 0122) protein is Ketol-acid reductoisomerase (NADP(+)).